The following is a 182-amino-acid chain: Auxin-responsive protein IAA9 (182 aa).

Residues 1 to 41 (MELELGLAPPNSGHLVVDELSSSSSSGGGSGSAPVSASSAG) form a disordered region. An EAR-like (transcriptional repression) motif is present at residues 3 to 7 (LELGL). A compositionally biased stretch (low complexity) spans 32 to 41 (SAPVSASSAG). Residues 92 to 182 (ANYVKVKKEG…RSVKRLKILG (91 aa)) form the PB1 domain.

It belongs to the Aux/IAA family. Homodimers and heterodimers. Expressed in etiolated shoots and flowers.

Its subcellular location is the nucleus. Its function is as follows. Aux/IAA proteins are short-lived transcriptional factors that function as repressors of early auxin response genes at low auxin concentrations. The polypeptide is Auxin-responsive protein IAA9 (IAA9) (Oryza sativa subsp. japonica (Rice)).